Here is a 303-residue protein sequence, read N- to C-terminus: Pseudouridine-5'-phosphate glycosidase (303 aa).

The active-site Proton donor is the Glu-24. Residues Lys-85 and Val-105 each coordinate substrate. Asp-137 contributes to the Mn(2+) binding site. Substrate is bound at residue 139–141 (SAD). The Nucleophile role is filled by Lys-158.

The protein belongs to the pseudouridine-5'-phosphate glycosidase family. In terms of assembly, homotrimer. The cofactor is Mn(2+).

It catalyses the reaction D-ribose 5-phosphate + uracil = psi-UMP + H2O. In terms of biological role, catalyzes the reversible cleavage of pseudouridine 5'-phosphate (PsiMP) to ribose 5-phosphate and uracil. Functions biologically in the cleavage direction, as part of a pseudouridine degradation pathway. The protein is Pseudouridine-5'-phosphate glycosidase of Herpetosiphon aurantiacus (strain ATCC 23779 / DSM 785 / 114-95).